A 157-amino-acid chain; its full sequence is MNKKETRHRLIRSLISETTIHTQQELQERLQKNGITITQATLSRDMKELNLVKVTSGNDTHYEALAISQTRWEHRLRFYMEDALVMLKIVQHQIILKTLPGLAQSFGSILDAMQIPEIVATVCGDDTCLIVCEDNEQAKACYETLSHYTPPFFFSNK.

This sequence belongs to the ArgR family.

Its subcellular location is the cytoplasm. The protein operates within amino-acid degradation; L-arginine degradation via ADI pathway. In terms of biological role, regulates the transcription of the arc operon, involved in arginine catabolism. The protein is Arginine regulator (argR1) of Streptococcus pyogenes serotype M3 (strain SSI-1).